We begin with the raw amino-acid sequence, 271 residues long: Short-chain dehydrogenase/reductase SAT3 (271 aa).

NADP(+) contacts are provided by serine 17, aspartate 40, and asparagine 67. Serine 153 serves as the catalytic Proton donor. Positions 168, 172, and 203 each coordinate NADP(+). Catalysis depends on tyrosine 168, which acts as the Proton acceptor. Lysine 172 serves as the catalytic Lowers pKa of active site Tyr.

It belongs to the short-chain dehydrogenases/reductases (SDR) family.

Its pathway is mycotoxin biosynthesis. Short-chain dehydrogenase/reductase; part of the satratoxin SC1 cluster involved in the biosynthesis of satratoxins, trichothecene mycotoxins that are associated with human food poisonings. Satratoxins are suggested to be made by products of multiple gene clusters (SC1, SC2 and SC3) that encode 21 proteins in all, including polyketide synthases, acetyltransferases, and other enzymes expected to modify the trichothecene skeleton. SC1 encodes 10 proteins, SAT1 to SAT10. The largest are SAT8, which encodes a putative polyketide synthase (PKS) with a conventional non-reducing architecture, and SAT10, a putative protein containing four ankyrin repeats and thus may be involved in protein scaffolding. The putative short-chain reductase SAT3 may assist the PKS in some capacity. SAT6 contains a secretory lipase domain and acts probably as a trichothecene esterase. SAT5 encodes a putative acetyltransferase, and so, with SAT6, may affect endogenous protection from toxicity. The probable transcription factor SAT9 may regulate the expression of the SC1 cluster. SC2 encodes proteins SAT11 to SAT16, the largest of which encodes the putative reducing PKS SAT13. SAT11 is a cytochrome P450 monooxygenase, while SAT14 and SAT16 are probable acetyltransferases. The SC2 cluster may be regulated by the transcription factor SAT15. SC3 is a small cluster that encodes 5 proteins, SAT17 to SAT21. SAT21 is a putative MFS-type transporter which may have a role in exporting secondary metabolites. The four other proteins putatively encoded in SC3 include the taurine hydroxylase-like protein SAT17, the O-methyltransferase SAT18, the acetyltransferase SAT19, and the Cys6-type zinc finger SAT20, the latter being probably involved in regulation of SC3 expression. In Stachybotrys chartarum (strain CBS 109288 / IBT 7711) (Toxic black mold), this protein is Short-chain dehydrogenase/reductase SAT3.